Here is an 805-residue protein sequence, read N- to C-terminus: Leucine--tRNA ligase (805 aa).

Residues 40–51 carry the 'HIGH' region motif; sequence PYPSGAGLHVGH. The 'KMSKS' region signature appears at 576 to 580; sequence KMSKS. Lys-579 is a binding site for ATP.

Belongs to the class-I aminoacyl-tRNA synthetase family.

It localises to the cytoplasm. The catalysed reaction is tRNA(Leu) + L-leucine + ATP = L-leucyl-tRNA(Leu) + AMP + diphosphate. The polypeptide is Leucine--tRNA ligase (Brevibacillus brevis (strain 47 / JCM 6285 / NBRC 100599)).